The following is a 369-amino-acid chain: uncharacterized protein (369 aa).

This is an uncharacterized protein from Archaeoglobus fulgidus (strain ATCC 49558 / DSM 4304 / JCM 9628 / NBRC 100126 / VC-16).